We begin with the raw amino-acid sequence, 360 residues long: Olfactory receptor 1L1 (360 aa).

The Extracellular portion of the chain corresponds to 1-75; that stretch reads MERNHNPDNC…GLSSRPEDQK (75 aa). The N-linked (GlcNAc...) asparagine glycan is linked to N55. Residues 76–99 traverse the membrane as a helical segment; that stretch reads PLFAVFLPIYLITVIGNLLIILAI. Residues 100 to 107 lie on the Cytoplasmic side of the membrane; the sequence is RSDTRLQT. A helical membrane pass occupies residues 108–129; sequence PMYFFLSILSFVDICYVTVIIP. Over 130–150 the chain is Extracellular; sequence KMLVNFLSETKTISYSECLTQ. A disulfide bridge connects residues C147 and C239. Residues 151 to 170 traverse the membrane as a helical segment; sequence MYFFLAFGNTDSYLLAAMAI. The Cytoplasmic segment spans residues 171-189; sequence DRYVAICNPFHYITIMSHR. A helical membrane pass occupies residues 190–208; the sequence is CCVLLLVLSFCIPHFHSLL. Residues 209-246 are Extracellular-facing; the sequence is HILLTNQLIFCASNVIHHFFCDDQPVLKLSCSSHFVKE. A helical transmembrane segment spans residues 247 to 269; the sequence is ITVMTEGLAVIMTPFSCIIISYL. At 270-286 the chain is on the cytoplasmic side; that stretch reads RILITVLKIPSAAGKRK. A helical membrane pass occupies residues 287-309; that stretch reads AFSTCGSHLTVVTLFYGSISYLY. Residues 310 to 321 lie on the Extracellular side of the membrane; the sequence is FQPLSNYTVKDQ. An N-linked (GlcNAc...) asparagine glycan is attached at N315. A helical membrane pass occupies residues 322 to 341; it reads IATIIYTVLTPMLNPFIYSL. The Cytoplasmic portion of the chain corresponds to 342-360; it reads RNKDMKQGLAKLMHRMKCQ.

It belongs to the G-protein coupled receptor 1 family.

Its subcellular location is the cell membrane. Functionally, odorant receptor. The sequence is that of Olfactory receptor 1L1 (OR1L1) from Homo sapiens (Human).